Here is a 159-residue protein sequence, read N- to C-terminus: Superoxide dismutase [Cu-Zn] (159 aa).

Residues His47, His49, and His64 each coordinate Cu cation. Cys58 and Cys150 form a disulfide bridge. Residues His64, His72, His81, and Asp84 each coordinate Zn(2+). A Cu cation-binding site is contributed by His121.

The protein belongs to the Cu-Zn superoxide dismutase family. It depends on Cu cation as a cofactor. Requires Zn(2+) as cofactor.

The protein localises to the cytoplasm. It catalyses the reaction 2 superoxide + 2 H(+) = H2O2 + O2. Functionally, destroys radicals which are normally produced within the cells and which are toxic to biological systems. This is Superoxide dismutase [Cu-Zn] (SOD) from Haemonchus contortus (Barber pole worm).